The following is a 217-amino-acid chain: Probable GTP-binding protein EngB (217 aa).

The 184-residue stretch at 24-207 folds into the EngB-type G domain; that stretch reads SQPEICFAGR…HELIESWLIP (184 aa). GTP contacts are provided by residues 32–39, 59–63, 81–84, 148–151, and 185–188; these read GRSNAGKS, GRTQH, DLPG, TKCD, and LFSA. S39 and T61 together coordinate Mg(2+).

Belongs to the TRAFAC class TrmE-Era-EngA-EngB-Septin-like GTPase superfamily. EngB GTPase family. Requires Mg(2+) as cofactor.

Its function is as follows. Necessary for normal cell division and for the maintenance of normal septation. This chain is Probable GTP-binding protein EngB, found in Paraburkholderia phytofirmans (strain DSM 17436 / LMG 22146 / PsJN) (Burkholderia phytofirmans).